The sequence spans 605 residues: MAQAKKSVDIKNIRNFSIIAHIDHGKSTLADRFIQMCGGLQDREMQAQVLDSMELERERGITIKAASVTLYYTHPNGQEYQLNFIDTPGHVDFSYEVSRSLAACEGALLVVDAAQGVEAQSVANCYTAIEQGLEVLPILNKIDLPQAEPERVIHEIEEIIGIEATNAPTCSAKTGLGVEGVLETLVDVIPAPTGDREAPLQALIIDSWFDNYLGVVSLVRIKDGRIRKGDKMLVKSTGQTHIVTSVGVFNPKHTETGVLEAGEVGFVIAGIKDIFGAPVGDTITLSTTPEVASLPGFKKVKPQVYAGLFPIDASDFEPFREALQKLQINDSALFFEPESSDALGFGFRCGFLGMLHMEIVQERLEREYDLDLISSAPTVVYEAVTKKGDTIYIDSPSKMPDGSVVEDLREPIAECHILVPQEYLGNVMILCIERRGVQKDMKFLGNQVSITFEIPMAEVVMDFFDKLKSCSRGFASLDYNFIRFESSSLVKVDVLINGEKVDALAMICHRNDARHRGIALVDKMKDLIPRQMFDVAIQAAIGAQIIARSTVKAMRKNVLAKCYGGDVSRKKKLLAKQKEGKKRMKQVGSVEIPQEAFLAVLKVER.

Residues 11 to 193 (KNIRNFSIIA…TLVDVIPAPT (183 aa)) enclose the tr-type G domain. GTP is bound by residues 23-28 (DHGKST) and 140-143 (NKID).

It belongs to the TRAFAC class translation factor GTPase superfamily. Classic translation factor GTPase family. LepA subfamily.

The protein localises to the cell inner membrane. The catalysed reaction is GTP + H2O = GDP + phosphate + H(+). In terms of biological role, required for accurate and efficient protein synthesis under certain stress conditions. May act as a fidelity factor of the translation reaction, by catalyzing a one-codon backward translocation of tRNAs on improperly translocated ribosomes. Back-translocation proceeds from a post-translocation (POST) complex to a pre-translocation (PRE) complex, thus giving elongation factor G a second chance to translocate the tRNAs correctly. Binds to ribosomes in a GTP-dependent manner. The polypeptide is Elongation factor 4 (Acinetobacter baumannii (strain SDF)).